The sequence spans 413 residues: Putative syntaxin-5 (413 aa).

Residues 1-391 are Cytoplasmic-facing; the sequence is MSDFHNIRSR…RYLQNISKNR (391 aa). A disordered region spans residues 257 to 290; it reads KNRRDKFSSGAAVPMGLPSSSSGANVRSKLLQDD. A t-SNARE coiled-coil homology domain is found at 321-383; the sequence is LEYAQARSNT…DMAHSELVRY (63 aa). Residues 392–412 traverse the membrane as a helical; Anchor for type IV membrane protein segment; that stretch reads WLMIQVFGVLMVFFVVFVLFL. T413 is a topological domain (extracellular).

This sequence belongs to the syntaxin family.

The protein resides in the membrane. Potentially involved in docking of synaptic vesicles at presynaptic active zones. This is Putative syntaxin-5 (syx-5) from Caenorhabditis elegans.